A 919-amino-acid polypeptide reads, in one-letter code: Synphilin-1 (919 aa).

Disordered stretches follow at residues 80 to 99 (SPLK…DQKN), 108 to 140 (GGES…STSL), and 287 to 313 (SSAA…EERS). Residues 299 to 308 (SGLNRTSSQG) show a composition bias toward polar residues. ANK repeat units lie at residues 349–380 (NGNN…CLNE), 384–413 (EKLT…AIAE), 419–448 (DFPS…EQGI), and 456–485 (DGNS…NVTM). Residues 515 to 552 (CMSLASQVVKLTKQLKEQTVERVTLQNQLQQFLEAQKS) are a coiled coil. 3 disordered regions span residues 549-615 (AQKS…KDED), 666-713 (RLRQ…SMDS), and 728-919 (SGGR…NKAA). Over residues 555-571 (KSLPSSPSSPSSPASRK) the composition is skewed to low complexity. The stretch at 603-632 (ASSRARPKAKDEDSDKILRQLLGKEISENV) is one ANK 5 repeat. Residues 667–685 (LRQLMQRSLSESDTDSNNS) show a composition bias toward low complexity. The span at 686-700 (EDPKTTPVRKADRPR) shows a compositional bias: basic and acidic residues. Residues 699–729 (PRPQPIVESVESMDSAESLHLMIKKHTLASG) form an ANK 6 repeat. The span at 774 to 785 (PSGDPQQPSPDS) shows a compositional bias: low complexity. Residues 833 to 842 (NGEKDKDKGR) show a composition bias toward basic and acidic residues. Positions 844 to 854 (LQRTSTSNESG) are enriched in polar residues. Over residues 874–886 (NQNNNNNYQAANQ) the composition is skewed to low complexity.

As to quaternary structure, homodimer. Heterodimer of isoform 1 and isoform 2. Interacts with SIAH1, SIAH2, SNCA, RNF19A and PRKN. Isoform 2 has a strong tendency to form aggregates and can sequester isoform 1. Post-translationally, ubiquitinated; mediated by SIAH1, SIAH2 or RNF19A and leading to its subsequent proteasomal degradation. In the absence of proteasomal degradation, ubiquitinated SNCAIP accumulates in cytoplasmic inclusion bodies. Isoform 2 is subject to limited ubiquitination that does not lead to proteasomal degradation. Detected in brain (at protein level). Widely expressed, with highest levels in brain, heart and placenta.

The protein localises to the cytoplasm. Its function is as follows. Isoform 2 inhibits the ubiquitin ligase activity of SIAH1 and inhibits proteasomal degradation of target proteins. Isoform 2 inhibits autoubiquitination and proteasomal degradation of SIAH1, and thereby increases cellular levels of SIAH. Isoform 2 modulates SNCA monoubiquitination by SIAH1. This Homo sapiens (Human) protein is Synphilin-1 (SNCAIP).